Reading from the N-terminus, the 171-residue chain is MRRVLFSCFCGLLWSSSGWAVDPLGTININLHGNVVDFSCTVNTADIDKTVDLGRWPTTQLLNAGDTTALVPFSLRLEGCPPGSVAILFTGTPASDTNLLALDDPAMAQTVAIELRNSDRSRLALGEASPTEEVDANGNVTLNFFANYRALASGVRPGVAKADAIFMINYN.

The signal sequence occupies residues methionine 1 to alanine 20. The cysteines at positions 40 and 80 are disulfide-linked.

Belongs to the fimbrial protein family.

It localises to the fimbrium. Part of the sfmACDHF fimbrial operon. Could contribute to adhesion to various surfaces in specific environmental niches. Increases adhesion to eukaryotic T24 bladder epithelial cells in the absence of fim genes. This is an uncharacterized protein from Escherichia coli (strain K12).